A 719-amino-acid polypeptide reads, in one-letter code: Phosphoribosylformylglycinamidine synthase subunit PurL (719 aa).

Residue histidine 47 is part of the active site. Residues tyrosine 50 and lysine 89 each coordinate ATP. Glutamate 91 lines the Mg(2+) pocket. Residues 92 to 95 (SHNH) and arginine 114 contribute to the substrate site. The active-site Proton acceptor is histidine 93. Aspartate 115 is a binding site for Mg(2+). Glutamine 238 contacts substrate. Aspartate 266 contributes to the Mg(2+) binding site. 310–312 (ESQ) serves as a coordination point for substrate. Residues aspartate 488 and glycine 525 each contribute to the ATP site. Asparagine 526 serves as a coordination point for Mg(2+). A substrate-binding site is contributed by serine 528.

It belongs to the FGAMS family. In terms of assembly, monomer. Part of the FGAM synthase complex composed of 1 PurL, 1 PurQ and 2 PurS subunits.

The protein resides in the cytoplasm. The enzyme catalyses N(2)-formyl-N(1)-(5-phospho-beta-D-ribosyl)glycinamide + L-glutamine + ATP + H2O = 2-formamido-N(1)-(5-O-phospho-beta-D-ribosyl)acetamidine + L-glutamate + ADP + phosphate + H(+). The protein operates within purine metabolism; IMP biosynthesis via de novo pathway; 5-amino-1-(5-phospho-D-ribosyl)imidazole from N(2)-formyl-N(1)-(5-phospho-D-ribosyl)glycinamide: step 1/2. Its function is as follows. Part of the phosphoribosylformylglycinamidine synthase complex involved in the purines biosynthetic pathway. Catalyzes the ATP-dependent conversion of formylglycinamide ribonucleotide (FGAR) and glutamine to yield formylglycinamidine ribonucleotide (FGAM) and glutamate. The FGAM synthase complex is composed of three subunits. PurQ produces an ammonia molecule by converting glutamine to glutamate. PurL transfers the ammonia molecule to FGAR to form FGAM in an ATP-dependent manner. PurS interacts with PurQ and PurL and is thought to assist in the transfer of the ammonia molecule from PurQ to PurL. This Roseobacter denitrificans (strain ATCC 33942 / OCh 114) (Erythrobacter sp. (strain OCh 114)) protein is Phosphoribosylformylglycinamidine synthase subunit PurL.